A 346-amino-acid polypeptide reads, in one-letter code: GTP 3',8-cyclase (346 aa).

The region spanning 10 to 240 (QRSRPLRVLR…VTRIRARWPL (231 aa)) is the Radical SAM core domain. Arginine 19 contacts GTP. [4Fe-4S] cluster-binding residues include cysteine 26 and cysteine 30. Tyrosine 32 contributes to the S-adenosyl-L-methionine binding site. [4Fe-4S] cluster is bound at residue cysteine 33. Arginine 65 provides a ligand contact to GTP. Position 69 (glycine 69) interacts with S-adenosyl-L-methionine. Threonine 104 contributes to the GTP binding site. Residue serine 129 coordinates S-adenosyl-L-methionine. GTP is bound at residue lysine 177. Methionine 211 is a binding site for S-adenosyl-L-methionine. Residues cysteine 274 and cysteine 277 each coordinate [4Fe-4S] cluster. GTP is bound at residue 279–281 (RLR). A [4Fe-4S] cluster-binding site is contributed by cysteine 291. Residues 326–346 (SDERQQTTGSMPHAEMAYLGG) are disordered.

It belongs to the radical SAM superfamily. MoaA family. Monomer and homodimer. [4Fe-4S] cluster serves as cofactor.

The catalysed reaction is GTP + AH2 + S-adenosyl-L-methionine = (8S)-3',8-cyclo-7,8-dihydroguanosine 5'-triphosphate + 5'-deoxyadenosine + L-methionine + A + H(+). The protein operates within cofactor biosynthesis; molybdopterin biosynthesis. Catalyzes the cyclization of GTP to (8S)-3',8-cyclo-7,8-dihydroguanosine 5'-triphosphate. The chain is GTP 3',8-cyclase from Parasynechococcus marenigrum (strain WH8102).